A 355-amino-acid polypeptide reads, in one-letter code: Glycerol-1-phosphate dehydrogenase [NAD(P)+] (355 aa).

NAD(+) contacts are provided by residues 101–105 (GKSID) and 123–126 (TAAS). Residue aspartate 128 coordinates substrate. Residue serine 132 participates in NAD(+) binding. Aspartate 175 contacts substrate. 2 residues coordinate Zn(2+): aspartate 175 and histidine 255. Position 259 (histidine 259) interacts with substrate. Residue histidine 271 coordinates Zn(2+).

It belongs to the glycerol-1-phosphate dehydrogenase family. As to quaternary structure, homodimer. Zn(2+) serves as cofactor.

The protein localises to the cytoplasm. The catalysed reaction is sn-glycerol 1-phosphate + NAD(+) = dihydroxyacetone phosphate + NADH + H(+). The enzyme catalyses sn-glycerol 1-phosphate + NADP(+) = dihydroxyacetone phosphate + NADPH + H(+). It functions in the pathway membrane lipid metabolism; glycerophospholipid metabolism. Functionally, catalyzes the NAD(P)H-dependent reduction of dihydroxyacetonephosphate (DHAP or glycerone phosphate) to glycerol 1-phosphate (G1P). The G1P thus generated is used as the glycerophosphate backbone of phospholipids in the cellular membranes of Archaea. The protein is Glycerol-1-phosphate dehydrogenase [NAD(P)+] of Staphylothermus marinus (strain ATCC 43588 / DSM 3639 / JCM 9404 / F1).